A 358-amino-acid chain; its full sequence is Trace amine-associated receptor 7e (358 aa).

Residues 1 to 47 (MATGDDSFLWDQDSILSRDLFSATSAELCYENLNRSCVRSPYSPGPR) lie on the Extracellular side of the membrane. Asn-34 carries N-linked (GlcNAc...) asparagine glycosylation. 2 cysteine pairs are disulfide-bonded: Cys-37/Cys-201 and Cys-120/Cys-205. The helical transmembrane segment at 48 to 68 (LILYAVFGFGAVLAVCGNLLV) threads the bilayer. The Cytoplasmic portion of the chain corresponds to 69–83 (MTSILHFRQLHSPAN). The helical transmembrane segment at 84–104 (FLVASLACADFLVGLTVMPFS) threads the bilayer. The Extracellular segment spans residues 105 to 121 (TVRSVEGCWYFGEIYCK). A helical membrane pass occupies residues 122–143 (LHTCFDVSFCSSSIFHLCFISV). Residues 144–166 (DRYIAVSDPLIYPTRFTASVSNK) lie on the Cytoplasmic side of the membrane. A helical membrane pass occupies residues 167 to 187 (CITFSWLLSISYGFSLIYTGA). At 188 to 212 (SEAGLEDLVSALTCVGGCQLAVNQS) the chain is on the extracellular side. Asn-210 carries N-linked (GlcNAc...) asparagine glycosylation. Residues 213–233 (WVFINFLLFLIPTLVMITVYS) form a helical membrane-spanning segment. Residues 234 to 274 (KIFLIAKQQAQNIEKMSKQTARASDSYKDRVAKRERKAAKT) are Cytoplasmic-facing. Residues 275 to 295 (LGIAVAAFLLSWLPYFIDSFI) form a helical membrane-spanning segment. Over 296–309 (DAFLGFITPTYVYE) the chain is Extracellular. A helical membrane pass occupies residues 310-333 (ILVWIAYYNSAMNPLIYAFFYPWF). At 334 to 358 (RKAIKLTVTGKILRENSSTTNLFPE) the chain is on the cytoplasmic side.

Belongs to the G-protein coupled receptor 1 family. In terms of tissue distribution, specifically expressed in neurons of the olfactory epithelium.

Its subcellular location is the cell membrane. Functionally, olfactory receptor specific for N,N-dimethylalkylamines trace amines. Trace amine compounds are enriched in animal body fluids and act on trace amine-associated receptors (TAARs) to elicit both intraspecific and interspecific innate behaviors. Ligand-binding causes a conformation change that triggers signaling via G(s)-class of G alpha proteins (GNAL or GNAS). In Mus musculus (Mouse), this protein is Trace amine-associated receptor 7e.